The chain runs to 1530 residues: DNA-directed RNA polymerase III subunit RPC1 (1530 aa).

Zn(2+) contacts are provided by Cys-74, Cys-77, Cys-84, His-87, Cys-114, Cys-117, and Cys-161. Mg(2+) contacts are provided by Asp-503, Asp-505, and Asp-507. The interval 846-858 (PTEFFFHTMAGRE) is bridging helix. A compositionally biased stretch (basic and acidic residues) spans 992–1001 (EEQESREDAL). Disordered stretches follow at residues 992–1016 (EEQE…SRPR) and 1057–1099 (NLLN…SKEG).

The protein belongs to the RNA polymerase beta' chain family. As to quaternary structure, component of the RNA polymerase III (Pol III) complex consisting of 17 subunits.

The protein resides in the nucleus. The enzyme catalyses RNA(n) + a ribonucleoside 5'-triphosphate = RNA(n+1) + diphosphate. DNA-dependent RNA polymerase catalyzes the transcription of DNA into RNA using the four ribonucleoside triphosphates as substrates. Largest and catalytic core component of RNA polymerase III which synthesizes small RNAs, such as 5S rRNA and tRNAs. Forms the polymerase active center together with the second largest subunit. A single-stranded DNA template strand of the promoter is positioned within the central active site cleft of Pol III. A bridging helix emanates from RPC1 and crosses the cleft near the catalytic site and is thought to promote translocation of Pol III by acting as a ratchet that moves the RNA-DNA hybrid through the active site by switching from straight to bent conformations at each step of nucleotide addition. In Trypanosoma brucei brucei, this protein is DNA-directed RNA polymerase III subunit RPC1.